A 317-amino-acid chain; its full sequence is tRNA dimethylallyltransferase (317 aa).

19-26 (GPTASGKS) is an ATP binding site. 21–26 (TASGKS) serves as a coordination point for substrate. The interaction with substrate tRNA stretch occupies residues 44–47 (DSMQ).

The protein belongs to the IPP transferase family. Monomer. Requires Mg(2+) as cofactor.

The enzyme catalyses adenosine(37) in tRNA + dimethylallyl diphosphate = N(6)-dimethylallyladenosine(37) in tRNA + diphosphate. Its function is as follows. Catalyzes the transfer of a dimethylallyl group onto the adenine at position 37 in tRNAs that read codons beginning with uridine, leading to the formation of N6-(dimethylallyl)adenosine (i(6)A). This chain is tRNA dimethylallyltransferase, found in Methylorubrum extorquens (strain PA1) (Methylobacterium extorquens).